Here is a 62-residue protein sequence, read N- to C-terminus: UPF0434 protein Arad_4458 (62 aa).

Belongs to the UPF0434 family.

This Rhizobium rhizogenes (strain K84 / ATCC BAA-868) (Agrobacterium radiobacter) protein is UPF0434 protein Arad_4458.